A 330-amino-acid polypeptide reads, in one-letter code: tRNA uridine(34) hydroxylase (330 aa).

Positions 123-217 (SDPEVILVDT…YLEEVKQEES (95 aa)) constitute a Rhodanese domain. Cys-177 functions as the Cysteine persulfide intermediate in the catalytic mechanism.

This sequence belongs to the TrhO family.

The catalysed reaction is uridine(34) in tRNA + AH2 + O2 = 5-hydroxyuridine(34) in tRNA + A + H2O. In terms of biological role, catalyzes oxygen-dependent 5-hydroxyuridine (ho5U) modification at position 34 in tRNAs. The protein is tRNA uridine(34) hydroxylase of Shewanella sp. (strain MR-4).